A 354-amino-acid polypeptide reads, in one-letter code: Arginase-2, mitochondrial (354 aa).

The N-terminal 22 residues, 1–22 (MSLRSHLSRLLRTQVHSVRKKS), are a transit peptide targeting the mitochondrion. Mn(2+) is bound by residues histidine 120, aspartate 143, histidine 145, and aspartate 147. Substrate-binding positions include 145-149 (HADIN), 156-158 (SGN), and aspartate 202. The Mn(2+) site is built by aspartate 251 and aspartate 253. Substrate is bound by residues threonine 265 and glutamate 296. Residues 332–354 (IVYDQLPTPSSPDESESEERVRI) are disordered.

This sequence belongs to the arginase family. In terms of assembly, homotrimer. The cofactor is Mn(2+).

Its subcellular location is the mitochondrion. The enzyme catalyses L-arginine + H2O = urea + L-ornithine. Its pathway is nitrogen metabolism; urea cycle; L-ornithine and urea from L-arginine: step 1/1. Its function is as follows. May play a role in the regulation of extra-urea cycle arginine metabolism and also in down-regulation of nitric oxide synthesis. Extrahepatic arginase functions to regulate L-arginine bioavailability to nitric oxid synthase (NOS). Arginine metabolism is a critical regulator of innate and adaptive immune responses. Seems to be involved in negative regulation of the survival capacity of activated T cells. May suppress inflammation-related signaling in asthmatic airway epithelium. May play a role in promoting prenatal immune suppression. Regulates RPS6KB1 signaling, which promotes endothelial cell senescence and inflammation and implicates NOS3/eNOS dysfunction. Can inhibit endothelial autophagy independently of its enzymatic activity implicating mTORC2 signaling. Involved in vascular smooth muscle cell senescence and apoptosis independently of its enzymatic activity. This chain is Arginase-2, mitochondrial (ARG2), found in Bos taurus (Bovine).